We begin with the raw amino-acid sequence, 179 residues long: Nicotinamide-nucleotide adenylyltransferase (179 aa).

Belongs to the archaeal NMN adenylyltransferase family.

The protein localises to the cytoplasm. It catalyses the reaction beta-nicotinamide D-ribonucleotide + ATP + H(+) = diphosphate + NAD(+). Its pathway is cofactor biosynthesis; NAD(+) biosynthesis; NAD(+) from nicotinamide D-ribonucleotide: step 1/1. The polypeptide is Nicotinamide-nucleotide adenylyltransferase (Thermoplasma acidophilum (strain ATCC 25905 / DSM 1728 / JCM 9062 / NBRC 15155 / AMRC-C165)).